The sequence spans 83 residues: RNA-binding protein Hfq (83 aa).

The region spanning 11-71 (DVFLNYIRKN…ISTIMPASPV (61 aa)) is the Sm domain.

This sequence belongs to the Hfq family. As to quaternary structure, homohexamer.

RNA chaperone that binds small regulatory RNA (sRNAs) and mRNAs to facilitate mRNA translational regulation in response to envelope stress, environmental stress and changes in metabolite concentrations. Also binds with high specificity to tRNAs. This is RNA-binding protein Hfq from Rhodospirillum rubrum (strain ATCC 11170 / ATH 1.1.1 / DSM 467 / LMG 4362 / NCIMB 8255 / S1).